A 195-amino-acid polypeptide reads, in one-letter code: Alkyl hydroperoxide reductase C (195 aa).

In terms of domain architecture, Thioredoxin spans 4–170 (LTIGDQFPEY…VLRVLDALQS (167 aa)). K41 participates in a covalent cross-link: Isoglutamyl lysine isopeptide (Lys-Gln) (interchain with Q-Cter in protein Pup). C61 serves as the catalytic Cysteine sulfenic acid (-SOH) intermediate.

It belongs to the peroxiredoxin family. AhpC/Prx1 subfamily. As to quaternary structure, homodimer; disulfide-linked, upon oxidation. 6 homodimers assemble to form a ring-like dodecamer. Identified in a complex with AhpD, DlaT and Lpd.

The protein localises to the cytoplasm. The enzyme catalyses N(6)-[(R)-dihydrolipoyl]-L-lysyl-[lipoyl-carrier protein] + a hydroperoxide = N(6)-[(R)-lipoyl]-L-lysyl-[lipoyl-carrier protein] + an alcohol + H2O. Functionally, thiol-specific peroxidase that catalyzes the reduction of hydrogen peroxide and organic hydroperoxides to water and alcohols, respectively. Plays a role in cell protection against oxidative stress by detoxifying peroxides. Together with AhpD, DlaT and Lpd, constitutes an NADH-dependent peroxidase active against hydrogen and alkyl peroxides as well as serving as a peroxynitrite reductase, thus protecting the bacterium against reactive nitrogen intermediates and oxidative stress generated by the host immune system. Does not however seem to play a role in detoxification of isoniazid. The chain is Alkyl hydroperoxide reductase C from Mycolicibacterium smegmatis (strain ATCC 700084 / mc(2)155) (Mycobacterium smegmatis).